A 117-amino-acid chain; its full sequence is Large ribosomal subunit protein eL34 (117 aa).

At Ser-12 the chain carries Phosphoserine. An N6-acetyllysine mark is found at Lys-36 and Lys-43. A Glycyl lysine isopeptide (Lys-Gly) (interchain with G-Cter in SUMO2) cross-link involves residue Lys-108.

Belongs to the eukaryotic ribosomal protein eL34 family. As to quaternary structure, component of the large ribosomal subunit.

It localises to the cytoplasm. The protein localises to the cytosol. The protein resides in the endoplasmic reticulum. In terms of biological role, component of the large ribosomal subunit. The ribosome is a large ribonucleoprotein complex responsible for the synthesis of proteins in the cell. This is Large ribosomal subunit protein eL34 (Rpl34) from Mus musculus (Mouse).